The following is a 434-amino-acid chain: MAGSISSMYSPSAGLISLCQSQVRLLQQGLRVDWCGVYLNQEETEQGLVPLVVSHGSTLVESESYGLISLPQGEVSPPMDDFSLPAVPVGVGQLSRRSRLEPPPFDADKRLVLPLVYGEEMVGLLVIHRSQGQWHGEEMMQLEAIAKSLAVACLLDQQQDWYRQAWEEQNQQYQWERQHWADLLHQLRNPLTALKTFSKLLLKRWHGDNKSQQVVEGIVRQGEHLQELLQSFEASQSQGPEAVPLLSSSPVTTIQVLPPADRVETMPLANFSLGEVLPPILLAHQAIAAERNITLTAQIALIDTVVMANRLALREVVNNLLDNGIKYTPNGGLVEVSLALEKVSSSGMDWATLAIADTGYGIPPEDQQKIFERNYRGVQGRGSINGTGLGLAIVADLVAQMGGKITVTSPNGLSRDPDQPGSTFTLWLRSGEQV.

One can recognise a GAF domain in the interval 16 to 152; it reads ISLCQSQVRL…EAIAKSLAVA (137 aa). A [3Fe-4S] cluster-binding site is contributed by Cys19. Positions 182–432 constitute a Histidine kinase domain; the sequence is DLLHQLRNPL…TFTLWLRSGE (251 aa). His185 carries the phosphohistidine; by autocatalysis modification. A G1 box motif is present at residues 357-361; the sequence is DTGYG. Residues 386–390 carry the G2 box motif; that stretch reads GTGLG.

Belongs to the chloroplast sensor kinase protein family. In terms of assembly, exists as monomers, tetramers, hexamers and other higher-order oligomers; all are able to autophosphorylate. Upon treatment with 0.5 M NaCl only tetramers are seen, which are probably inactive. Interacts with both RppA and Rre1. [3Fe-4S] cluster is required as a cofactor. Autophosphorylates, probably on His-185.

The protein resides in the cytoplasm. It catalyses the reaction ATP + protein L-histidine = ADP + protein N-phospho-L-histidine.. Its activity is regulated as follows. Autophosphorylation is inhibited by Na(+) but not by Cl(-). Reducing agents dithionite, duroquinol and decyl-plastoquinone, but not NADPH or ferredoxin inhibit autophosphorylation. Oxidation of the Fe-S cluster (with potassium ferricyanide) induces a conformational change that is conducive to its autophosphorylation activity. In terms of biological role, member of possibly 2 two-component regulatory system(s) Hik2/Rre1 and Hik2/RppA. Transduces PQ (plastoquinone) redox signals to photosystem gene expression machinery during the adjustment of photosystem stoichiometry. Reduced PQ suppresses its autophosphorylation activity (i.e. kinase activity is higher under oxidizing conditions). Member of two-component regulatory system Hik2/Rre1, controls expression of sigB (sll0306), sll0528, slr1119, slr0852 and ssr3188 in response to hyperosmotic stress. Activity responds to high salt (with a linear response as concentrations rise to 0.5 M NaCl); detects Cl(-) levels. Autophosphorylates and transfers phosphate to Rre1. May transfer phosphate to RppA in a possible Hik2/RppA two-component system. The sequence is that of Sensor histidine kinase Hik2 from Synechocystis sp. (strain ATCC 27184 / PCC 6803 / Kazusa).